A 452-amino-acid chain; its full sequence is MKVISNFQNKKILILGLAKSGEAAAKLLTKLGALVTVNDSKPFDQNPAAQALLEEGIKVICGSHPVELLDENFEYMVKNPGIPYDNPMVKRALAKEIPILTEVELAYFVSEAPIIGITGSNGKTTTTTMIADVLNAGGQSALLSGNIGYPASKVVQKAIAGDTLVMELSSFQLVGVNAFRPHIAVITNLMPTHLDYHGSFEDYVAAKWMIQAQMTESDYLILNANQEISATLAKTTKATVIPFSTQKVVDGAYLNDGILYFKEQAIIAATDLGVPGSHNIENALATIAVAKLSGIADDIIAQCLSHFGGVKHRLQRVGQIKDITFYNDSKSTNILATQKALSGFDNSRLILIAGGLDRGNEFDDLVPDLLGLKQMIILGESAERMKRAANKAEVSYLEARNVAEATELAFKLAQTGDTILLSPANASWDMYPNFEVRGDEFLATFDCLRGDA.

Residue 119–125 (GSNGKTT) coordinates ATP.

Belongs to the MurCDEF family.

The protein resides in the cytoplasm. The enzyme catalyses UDP-N-acetyl-alpha-D-muramoyl-L-alanine + D-glutamate + ATP = UDP-N-acetyl-alpha-D-muramoyl-L-alanyl-D-glutamate + ADP + phosphate + H(+). Its pathway is cell wall biogenesis; peptidoglycan biosynthesis. In terms of biological role, cell wall formation. Catalyzes the addition of glutamate to the nucleotide precursor UDP-N-acetylmuramoyl-L-alanine (UMA). The sequence is that of UDP-N-acetylmuramoylalanine--D-glutamate ligase from Streptococcus pyogenes serotype M6 (strain ATCC BAA-946 / MGAS10394).